The following is a 489-amino-acid chain: Glycogen synthase (489 aa).

K15 contacts ADP-alpha-D-glucose.

The protein belongs to the glycosyltransferase 1 family. Bacterial/plant glycogen synthase subfamily.

The catalysed reaction is [(1-&gt;4)-alpha-D-glucosyl](n) + ADP-alpha-D-glucose = [(1-&gt;4)-alpha-D-glucosyl](n+1) + ADP + H(+). It participates in glycan biosynthesis; glycogen biosynthesis. Synthesizes alpha-1,4-glucan chains using ADP-glucose. In Francisella tularensis subsp. holarctica (strain FTNF002-00 / FTA), this protein is Glycogen synthase.